Here is a 459-residue protein sequence, read N- to C-terminus: Cysteine--tRNA ligase (459 aa).

Cys-28 is a Zn(2+) binding site. The 'HIGH' region signature appears at 30–40 (VTIYDLCHIGH). 3 residues coordinate Zn(2+): Cys-209, His-234, and Glu-238. The 'KMSKS' region motif lies at 266-270 (KMSKS). ATP is bound at residue Lys-269.

The protein belongs to the class-I aminoacyl-tRNA synthetase family. In terms of assembly, monomer. Zn(2+) is required as a cofactor.

Its subcellular location is the cytoplasm. The enzyme catalyses tRNA(Cys) + L-cysteine + ATP = L-cysteinyl-tRNA(Cys) + AMP + diphosphate. The polypeptide is Cysteine--tRNA ligase (Shewanella baltica (strain OS155 / ATCC BAA-1091)).